Here is a 978-residue protein sequence, read N- to C-terminus: Tyrosine-protein kinase transforming protein fms (978 aa).

Residues 1–543 (RMPSGPGHYG…IGAHTPLPDE (543 aa)) lie on the Extracellular side of the membrane. Ig-like C2-type domains are found at residues 55-134 (PVIQ…IHLY), 141-231 (PWKV…KVQK), 236-331 (PATL…RVVE), 333-431 (AYSN…LTLR), and 434-533 (PEVR…WPIS). Cysteine 76 and cysteine 118 are disulfide-bonded. N-linked (GlcNAc...) asparagine; by host glycosylation is found at asparagine 79, asparagine 107, asparagine 128, asparagine 187, asparagine 309, asparagine 320, asparagine 336, asparagine 369, asparagine 444, asparagine 511, and asparagine 524. 2 disulfides stabilise this stretch: cysteine 161-cysteine 211 and cysteine 258-cysteine 312. A disulfide bridge links cysteine 451 with cysteine 516. The helical transmembrane segment at 544 to 568 (LLFTPVLLTCMSIMALLLLLLLLLL) threads the bilayer. Over 569–978 (YKYKQKPKYQ…PWQRTPPVAR (410 aa)) the chain is Cytoplasmic. The 330-residue stretch at 613-942 (LQFGKTLGTG…PTFQQICSLL (330 aa)) folds into the Protein kinase domain. ATP-binding positions include 619–627 (LGTGAFGKV) and lysine 647. The active-site Proton acceptor is the aspartate 810. Tyrosine 841 carries the phosphotyrosine; by autocatalysis modification. Residues 952–978 (VPNYTNLPSSSSSRLLRPWQRTPPVAR) form a disordered region. Residues 958-969 (LPSSSSSRLLRP) show a composition bias toward low complexity. The residue at position 973 (threonine 973) is a Phosphothreonine.

This sequence belongs to the protein kinase superfamily. Tyr protein kinase family. CSF-1/PDGF receptor subfamily.

The protein localises to the membrane. It catalyses the reaction L-tyrosyl-[protein] + ATP = O-phospho-L-tyrosyl-[protein] + ADP + H(+). Functionally, truncated version of the receptor for colony-stimulating factor 1 (CSF-1). The protein is Tyrosine-protein kinase transforming protein fms (V-FMS) of Felidae (cat family).